We begin with the raw amino-acid sequence, 37 residues long: Large ribosomal subunit protein bL36 (37 aa).

The protein belongs to the bacterial ribosomal protein bL36 family.

This Ureaplasma parvum serovar 3 (strain ATCC 27815 / 27 / NCTC 11736) protein is Large ribosomal subunit protein bL36.